The following is a 525-amino-acid chain: tRNA-2-methylthio-N(6)-dimethylallyladenosine synthase (525 aa).

Residues 14 to 130 (RTYQVRTYGC…LPTLLERARH (117 aa)) form the MTTase N-terminal domain. Positions 23, 59, 93, 167, 171, and 174 each coordinate [4Fe-4S] cluster. The Radical SAM core domain maps to 153 to 400 (RESAYAGWVS…IELQERISLE (248 aa)). A TRAM domain is found at 403-482 (QAQVGRTLEL…PHHLIADGAL (80 aa)).

This sequence belongs to the methylthiotransferase family. MiaB subfamily. As to quaternary structure, monomer. Requires [4Fe-4S] cluster as cofactor.

Its subcellular location is the cytoplasm. The enzyme catalyses N(6)-dimethylallyladenosine(37) in tRNA + (sulfur carrier)-SH + AH2 + 2 S-adenosyl-L-methionine = 2-methylsulfanyl-N(6)-dimethylallyladenosine(37) in tRNA + (sulfur carrier)-H + 5'-deoxyadenosine + L-methionine + A + S-adenosyl-L-homocysteine + 2 H(+). Its function is as follows. Catalyzes the methylthiolation of N6-(dimethylallyl)adenosine (i(6)A), leading to the formation of 2-methylthio-N6-(dimethylallyl)adenosine (ms(2)i(6)A) at position 37 in tRNAs that read codons beginning with uridine. The protein is tRNA-2-methylthio-N(6)-dimethylallyladenosine synthase of Mycobacterium sp. (strain MCS).